The sequence spans 386 residues: L-lactate dehydrogenase (386 aa).

In terms of domain architecture, FMN hydroxy acid dehydrogenase spans 1-380; it reads MIISASTDYR…TSDSLVQVTQ (380 aa). Tyr24 lines the substrate pocket. 2 residues coordinate FMN: Ser106 and Gln127. Residue Tyr129 coordinates substrate. Thr155 is a binding site for FMN. Arg164 is a binding site for substrate. Lys251 contacts FMN. Residue His275 is the Proton acceptor of the active site. Arg278 is a substrate binding site. An FMN-binding site is contributed by 306-330; sequence DSGIRSGLDVVRMIALGADGVMLGR.

It belongs to the FMN-dependent alpha-hydroxy acid dehydrogenase family. It depends on FMN as a cofactor.

It localises to the cell inner membrane. It catalyses the reaction (S)-lactate + A = pyruvate + AH2. Catalyzes the conversion of L-lactate to pyruvate. Is coupled to the respiratory chain. This is L-lactate dehydrogenase from Pectobacterium atrosepticum (strain SCRI 1043 / ATCC BAA-672) (Erwinia carotovora subsp. atroseptica).